The chain runs to 626 residues: MTANKNQKKTYNFKSETKELLHLMIHSLYSNREIFFRELISNAADAIDKLKFNAISAPELYENDTNLYIRIFSNKNNNSLTISDNGIGMKYEDIINNLGTIAKSGTKEFIKTLNKNNKIKNDLIGQFGVGFYSSFIVSEKVIVKTRFAGLKENQGVIWTSDGKGTYEVNEINKKERGTEVTLYLTKDHYEFLETWKIQNTVSKYSDHISIPIELNTYDEKEKTYFWKQINQAEAIWTRPKSEITELQYKNFYKKIANDTNDPLTWTHNKVEGNQEYTILLFIPSKSAWDIWNRDNKHGLKLYVKRVYIMDDAEQFLPNYLRFVKGIIDSNDLPLNVSREILQDHKLVYNLKKSLTKKVLQVLHSLSQNVSKYEIFWKQFGLILKEGPAEDSENRTSISNLIRFSSLLNNTQKPTMSLENYVKNMKQNQEKIYFITADNYASAVSSPHLEFFKKKNIDVLILSDKIDEWMMNYLIEYNEKKFQSVSKDDKSIEKLVHEQNSQNETYQENMNDFLNRAKKTLSDKIKDIRFTHKLTNTPAMVITDSNEMSTQMAKLFSAAGQTVPTIKYILEINPNHLLIKKINNEKNEKKFKNWINFLFEQCLLAEKNTLDNPNKFIARINDLLINN.

The interval 1–338 is a; substrate-binding; sequence MTANKNQKKT…SNDLPLNVSR (338 aa). A b region spans residues 339–553; it reads EILQDHKLVY…SNEMSTQMAK (215 aa). The segment at 554-626 is c; it reads LFSAAGQTVP…ARINDLLINN (73 aa).

The protein belongs to the heat shock protein 90 family. In terms of assembly, homodimer.

The protein resides in the cytoplasm. Functionally, molecular chaperone. Has ATPase activity. The protein is Chaperone protein HtpG of Buchnera aphidicola subsp. Baizongia pistaciae (strain Bp).